The primary structure comprises 368 residues: Glutaminyl-peptide cyclotransferase (368 aa).

The N-terminal stretch at 1–33 is a signal peptide; it reads MARERRDSKAATFFCLAWALCLALPGFPQHVSG. N-linked (GlcNAc...) asparagine glycosylation occurs at Asn53. An intrachain disulfide couples Cys143 to Cys169. Asp164 contacts Zn(2+). Glu207 (proton acceptor) is an active-site residue. Glu208 contributes to the Zn(2+) binding site. Asp254 acts as the Proton acceptor in catalysis. The N-linked (GlcNAc...) asparagine glycan is linked to Asn292. His336 lines the Zn(2+) pocket. Asn352 carries an N-linked (GlcNAc...) asparagine glycan.

Belongs to the glutaminyl-peptide cyclotransferase family. Expressed by the venom gland.

It localises to the secreted. It catalyses the reaction N-terminal L-glutaminyl-[peptide] = N-terminal 5-oxo-L-prolyl-[peptide] + NH4(+). In terms of biological role, responsible for the biosynthesis of pyroglutamyl peptides. Has a bias against acidic and tryptophan residues adjacent to the N-terminal glutaminyl residue and a lack of importance of chain length after the second residue. Also catalyzes N-terminal pyroglutamate formation. This Gloydius blomhoffii (Mamushi) protein is Glutaminyl-peptide cyclotransferase (QPCT).